The chain runs to 220 residues: Fructose-6-phosphate aldolase (220 aa).

The active-site Schiff-base intermediate with substrate is the K85.

Belongs to the transaldolase family. Type 3A subfamily. In terms of assembly, homodecamer.

It is found in the cytoplasm. The enzyme catalyses beta-D-fructose 6-phosphate = dihydroxyacetone + D-glyceraldehyde 3-phosphate. In terms of biological role, catalyzes the reversible formation of fructose 6-phosphate from dihydroxyacetone and D-glyceraldehyde 3-phosphate via an aldolization reaction. This chain is Fructose-6-phosphate aldolase, found in Klebsiella pneumoniae subsp. pneumoniae (strain ATCC 700721 / MGH 78578).